Consider the following 344-residue polypeptide: Pyruvate dehydrogenase E1 component subunit alpha (344 aa).

Residues His-55, Tyr-81, Arg-82, Ala-130, Ile-132, Asp-168, Gly-169, and Asn-197 each contribute to the pyruvate site. 8 residues coordinate thiamine diphosphate: Tyr-81, Arg-82, Ala-130, Ile-132, Asp-168, Gly-169, Asn-197, and His-266. Mg(2+) is bound at residue Asp-168. A Mg(2+)-binding site is contributed by Asn-197.

As to quaternary structure, heterodimer of an alpha and a beta chain. Thiamine diphosphate is required as a cofactor. The cofactor is Mg(2+).

Its subcellular location is the plastid. It is found in the chloroplast. It carries out the reaction N(6)-[(R)-lipoyl]-L-lysyl-[protein] + pyruvate + H(+) = N(6)-[(R)-S(8)-acetyldihydrolipoyl]-L-lysyl-[protein] + CO2. Functionally, the pyruvate dehydrogenase complex catalyzes the overall conversion of pyruvate to acetyl-CoA and CO(2). It contains multiple copies of three enzymatic components: pyruvate dehydrogenase (E1), dihydrolipoamide acetyltransferase (E2) and lipoamide dehydrogenase (E3). In Porphyra purpurea (Red seaweed), this protein is Pyruvate dehydrogenase E1 component subunit alpha (pdhA).